The sequence spans 217 residues: uncharacterized protein (217 aa).

2 disordered regions span residues 1-85 (MGVK…RGNT) and 167-189 (KLRS…EPDE). Over residues 38 to 48 (AKSDKDKRKGS) the composition is skewed to basic and acidic residues. The span at 60–78 (NALPTKNLTTPPALNPLTT) shows a compositional bias: low complexity. A compositionally biased stretch (basic and acidic residues) spans 172-189 (PHKDQHNSATNKDQEPDE).

This is an uncharacterized protein from Saccharomyces cerevisiae (strain ATCC 204508 / S288c) (Baker's yeast).